The chain runs to 3419 residues: Utrophin (3419 aa).

The segment at 1 to 246 is actin-binding; that stretch reads MAKYGHLEAS…LPDKKSIIMY (246 aa). The residue at position 4 (Tyr4) is a Phosphotyrosine. Ser10 carries the post-translational modification Phosphoserine. 2 Calponin-homology (CH) domains span residues 31-135 and 150-255; these read DVQK…LHWQ and TNSE…EVLP. Residues 268-905 form an interaction with SYNM region; sequence TLPRKYKKEC…YQQQLENELK (638 aa). Ser295 carries the phosphoserine modification. 17 Spectrin repeats span residues 312–416, 421–525, 532–636, 690–795, 801–901, 910–1012, 1019–1121, 1128–1229, 1236–1333, 1335–1436, 1438–1540, 1547–1648, 1653–1747, 1748–1840, 1841–1958, 1969–2070, and 2077–2176; these read DSYQ…SRLH, ELQK…NRLQ, QELL…NQVT, KKFD…RKIQ, NAYF…QQLE, PAYL…RSLE, RDFK…SRLS, MNLK…HTLE, VELL…ISLE, QLQV…LFQK, ANFE…QDLE, RKLK…NTLL, QLEV…INSA, QMLI…KIKA, IPQR…SDRR, KQFH…PRLK, and SGYR…KTRT. The interval 1336–1761 is interaction with SYNM; sequence LQVLRETDHM…GQDPAGTVEA (426 aa). Phosphoserine is present on Ser1998. A Phosphoserine modification is found at Ser2201. Spectrin repeat units follow at residues 2216-2319, 2336-2426, 2433-2542, 2549-2674, and 2681-2783; these read ADLD…QQLE, EELM…SALE, QTSR…AHLE, NRLL…KQVG, and RDLQ…KQLQ. Residues 2616–2640 form a disordered region; that stretch reads DQPIEAPEEPRRNPQSKTELTPEER. An interaction with SYNM region spans residues 2785–3152; that stretch reads AHRDFGPSSQ…TVLEGDNLET (368 aa). The WW domain occupies 2799–2832; it reads TSVQLPWQRSISHNKVPYYINHQTQTTCWDHPKM. The ZZ-type; degenerate zinc finger occupies 3052–3108; that stretch reads KHQAKCNICKECPIVGFRYRSLKHFNYDVCQSCFFSGRTAKGHKLHYPMVEYCIPTT. Residues Cys3057, Cys3060, Cys3081, and Cys3084 each coordinate Zn(2+). Disordered stretches follow at residues 3277–3296 and 3344–3395; these read RRGL…YHTS and DSDS…TDLT. A Phosphoserine modification is found at Ser3284.

In terms of assembly, homodimer. Interacts with the syntrophins SNTA1; SNTB1 and SNTB2. Interacts with SYNM. Interacts (via its WWW and ZZ domains) with DAG1 (via the PPXY motif of betaDAG1); the interaction is inhibited by the tyrosine phosphorylation of the PPXY motif of DAG1. Interacts with DTNB. Interacts with PGM5.

It is found in the postsynaptic cell membrane. Its subcellular location is the cytoplasm. It localises to the cytoskeleton. May play a role in anchoring the cytoskeleton to the plasma membrane. In Rattus norvegicus (Rat), this protein is Utrophin.